The primary structure comprises 156 residues: RNA polymerase sigma factor SigS (156 aa).

The Polymerase core binding motif lies at 29 to 44; sequence EYYQLLLIKMWQLSQI. Positions 126-145 form a DNA-binding region, H-T-H motif; the sequence is QFEIAEIMSLSLSTIKLIKM.

The protein belongs to the sigma-70 factor family.

Sigma factors are initiation factors that promote the attachment of RNA polymerase to specific initiation sites and are then released. Sigma-S contributes to the protection against external stress, thus playing a role in cellular fitness and survival. The sequence is that of RNA polymerase sigma factor SigS (sigS) from Staphylococcus aureus (strain Mu50 / ATCC 700699).